Here is a 429-residue protein sequence, read N- to C-terminus: Histidine--tRNA ligase (429 aa).

This sequence belongs to the class-II aminoacyl-tRNA synthetase family. As to quaternary structure, homodimer.

It is found in the cytoplasm. The enzyme catalyses tRNA(His) + L-histidine + ATP = L-histidyl-tRNA(His) + AMP + diphosphate + H(+). The protein is Histidine--tRNA ligase of Streptococcus pneumoniae (strain CGSP14).